The following is a 299-amino-acid chain: Mycothiol acetyltransferase (299 aa).

N-acetyltransferase domains follow at residues Met-1–Gly-156 and Val-149–Leu-299. Glu-33 is a binding site for 1D-myo-inositol 2-(L-cysteinylamino)-2-deoxy-alpha-D-glucopyranoside. Residues Leu-75–Val-77 and Arg-83–Thr-88 contribute to the acetyl-CoA site. Positions 176, 218, and 231 each coordinate 1D-myo-inositol 2-(L-cysteinylamino)-2-deoxy-alpha-D-glucopyranoside. Acetyl-CoA is bound by residues Val-235–Ile-237 and Gln-242–Arg-248. Tyr-269 serves as a coordination point for 1D-myo-inositol 2-(L-cysteinylamino)-2-deoxy-alpha-D-glucopyranoside. An acetyl-CoA-binding site is contributed by Asn-274–His-279.

It belongs to the acetyltransferase family. MshD subfamily. Monomer.

It catalyses the reaction 1D-myo-inositol 2-(L-cysteinylamino)-2-deoxy-alpha-D-glucopyranoside + acetyl-CoA = mycothiol + CoA + H(+). Functionally, catalyzes the transfer of acetyl from acetyl-CoA to desacetylmycothiol (Cys-GlcN-Ins) to form mycothiol. This chain is Mycothiol acetyltransferase, found in Rhodococcus erythropolis (strain PR4 / NBRC 100887).